The chain runs to 217 residues: Cytochrome b5 domain-containing protein 1 (217 aa).

A Cytochrome b5 heme-binding domain is found at 6-72 (PRFYTPREVS…NPKTGDVKTH (67 aa)). Heme-binding residues include His41 and His72.

This sequence belongs to the cytochrome b5 family.

It is found in the cytoplasm. It localises to the cytoskeleton. Its subcellular location is the cilium axoneme. Functionally, radial spoke stalk protein that binds heme under oxidizing conditions. Required for the coordinated beating of multiple cilia maybe by functioning in a redox signaling pathway. This Xenopus tropicalis (Western clawed frog) protein is Cytochrome b5 domain-containing protein 1 (cyb5d1).